A 351-amino-acid chain; its full sequence is Large ribosomal subunit protein uL3 (351 aa).

Disordered regions lie at residues 1 to 31 (MGHRKLASPRRGSAGLRPRKRSSELLPTPRT) and 246 to 271 (KGSRKIGTRGPSLGTPSYTPQPGQLG).

It belongs to the universal ribosomal protein uL3 family. Part of the 50S ribosomal subunit. Forms a cluster with proteins L14 and L24e.

In terms of biological role, one of the primary rRNA binding proteins, it binds directly near the 3'-end of the 23S rRNA, where it nucleates assembly of the 50S subunit. The sequence is that of Large ribosomal subunit protein uL3 from Saccharolobus islandicus (strain Y.N.15.51 / Yellowstone #2) (Sulfolobus islandicus).